The primary structure comprises 356 residues: 5-formaminoimidazole-4-carboxamide-1-(beta)-D-ribofuranosyl 5'-monophosphate synthetase (356 aa).

2 residues coordinate 5-amino-1-(5-phospho-beta-D-ribosyl)imidazole-4-carboxamide: H27 and S94. Positions 116-333 constitute an ATP-grasp domain; the sequence is RCLAWESDRE…YSDLIEKGLS (218 aa). Residues 145-196 and E226 contribute to the ATP site; that span reads AELI…TRYY. N255 serves as a coordination point for 5-amino-1-(5-phospho-beta-D-ribosyl)imidazole-4-carboxamide. Mg(2+)-binding residues include E293 and E306.

It belongs to the phosphohexose mutase family. It depends on Mg(2+) as a cofactor. The cofactor is Mn(2+).

The catalysed reaction is 5-amino-1-(5-phospho-beta-D-ribosyl)imidazole-4-carboxamide + formate + ATP = 5-formamido-1-(5-phospho-D-ribosyl)imidazole-4-carboxamide + ADP + phosphate. It participates in purine metabolism; IMP biosynthesis via de novo pathway; 5-formamido-1-(5-phospho-D-ribosyl)imidazole-4-carboxamide from 5-amino-1-(5-phospho-D-ribosyl)imidazole-4-carboxamide (formate route): step 1/1. Catalyzes the ATP- and formate-dependent formylation of 5-aminoimidazole-4-carboxamide-1-beta-d-ribofuranosyl 5'-monophosphate (AICAR) to 5-formaminoimidazole-4-carboxamide-1-beta-d-ribofuranosyl 5'-monophosphate (FAICAR) in the absence of folates. The sequence is that of 5-formaminoimidazole-4-carboxamide-1-(beta)-D-ribofuranosyl 5'-monophosphate synthetase from Methanothrix thermoacetophila (strain DSM 6194 / JCM 14653 / NBRC 101360 / PT) (Methanosaeta thermophila).